We begin with the raw amino-acid sequence, 348 residues long: Nicotinate-nucleotide--dimethylbenzimidazole phosphoribosyltransferase (348 aa).

Glu-316 functions as the Proton acceptor in the catalytic mechanism.

The protein belongs to the CobT family.

The catalysed reaction is 5,6-dimethylbenzimidazole + nicotinate beta-D-ribonucleotide = alpha-ribazole 5'-phosphate + nicotinate + H(+). It participates in nucleoside biosynthesis; alpha-ribazole biosynthesis; alpha-ribazole from 5,6-dimethylbenzimidazole: step 1/2. Its function is as follows. Catalyzes the synthesis of alpha-ribazole-5'-phosphate from nicotinate mononucleotide (NAMN) and 5,6-dimethylbenzimidazole (DMB). This Xanthomonas oryzae pv. oryzae (strain PXO99A) protein is Nicotinate-nucleotide--dimethylbenzimidazole phosphoribosyltransferase.